The primary structure comprises 128 residues: Probable 4-amino-4-deoxy-L-arabinose-phosphoundecaprenol flippase subunit ArnF (128 aa).

Over 1–10 the chain is Cytoplasmic; the sequence is MKGYLWGGAS. The chain crosses the membrane as a helical span at residues 11–31; that stretch reads VVLVTVAQLVLKWGMMNIPLL. The Periplasmic segment spans residues 32–47; that stretch reads SLADINVQFLTMYFVQ. The helical transmembrane segment at 48-68 threads the bilayer; the sequence is LASVMCGLMGYALSMLCWFFA. Residues 69–77 lie on the Cytoplasmic side of the membrane; it reads LRYLPLNRA. A helical transmembrane segment spans residues 78 to 98; the sequence is YPLLSLSYALVYLGAVLLPWF. The Periplasmic segment spans residues 99 to 101; it reads NEP. Residues 102–122 form a helical membrane-spanning segment; it reads ATLLKTLGAGFILLGIWLINI. Residues 123 to 128 are Cytoplasmic-facing; sequence KPIKAS.

Belongs to the ArnF family. Heterodimer of ArnE and ArnF.

The protein resides in the cell inner membrane. It participates in bacterial outer membrane biogenesis; lipopolysaccharide biosynthesis. Its function is as follows. Translocates 4-amino-4-deoxy-L-arabinose-phosphoundecaprenol (alpha-L-Ara4N-phosphoundecaprenol) from the cytoplasmic to the periplasmic side of the inner membrane. This Yersinia pseudotuberculosis serotype O:1b (strain IP 31758) protein is Probable 4-amino-4-deoxy-L-arabinose-phosphoundecaprenol flippase subunit ArnF.